The sequence spans 341 residues: Phosphoribosylformylglycinamidine cyclo-ligase (341 aa).

Belongs to the AIR synthase family.

The protein resides in the cytoplasm. The catalysed reaction is 2-formamido-N(1)-(5-O-phospho-beta-D-ribosyl)acetamidine + ATP = 5-amino-1-(5-phospho-beta-D-ribosyl)imidazole + ADP + phosphate + H(+). It participates in purine metabolism; IMP biosynthesis via de novo pathway; 5-amino-1-(5-phospho-D-ribosyl)imidazole from N(2)-formyl-N(1)-(5-phospho-D-ribosyl)glycinamide: step 2/2. In Xanthomonas campestris pv. campestris (strain B100), this protein is Phosphoribosylformylglycinamidine cyclo-ligase.